An 84-amino-acid polypeptide reads, in one-letter code: CLAVATA3/ESR (CLE)-related protein 13 (84 aa).

Positions 1–29 (MGRYTTDQVQVYVLVIVLCTFFSTLQARS) are cleaved as a signal peptide. The disordered stretch occupies residues 57 to 84 (KQVRDISGDRLSPAGPDPQHNGRSPPRK). Residues Pro-69 and Pro-72 each carry the hydroxyproline modification. Residue Pro-72 is glycosylated (O-linked (Ara...) hydroxyproline).

It belongs to the CLV3/ESR signal peptide family. In terms of processing, the O-glycosylation (arabinosylation) of the hydroxyproline Pro-72 enhances binding affinity of the CLE13p peptide for its receptor. As to expression, expressed in young nodules throughout the central tissue. Expressed in the apical region of elongated nodules, corresponding to the meristematic and early infection zones.

It is found in the secreted. It localises to the extracellular space. Signaling peptide involved in the regulation of nodulation. Moves from root to shoot to function with the receptor kinase SUNN, in a signaling pathway that plays roles during cellular differentiation, both at the onset of nodulation, and later during nodule meristem development and subsequent homeostasis. Interacts with SUNN signaling to control nodule numbers. SUNN is involved in the autoregulation of nodulation (AON), a long distance systemic signaling from root to shoot and back again, which allows legumes to limit the number of root nodules formed based on available nitrogen and previous rhizobial colonization. The chain is CLAVATA3/ESR (CLE)-related protein 13 from Medicago truncatula (Barrel medic).